Reading from the N-terminus, the 124-residue chain is Glycine cleavage system H protein (124 aa).

One can recognise a Lipoyl-binding domain in the interval 22 to 104 (LIVTGISDHA…YGKGWIYKMK (83 aa)). Position 63 is an N6-lipoyllysine (Lys-63).

Belongs to the GcvH family. In terms of assembly, the glycine cleavage system is composed of four proteins: P, T, L and H. (R)-lipoate serves as cofactor.

In terms of biological role, the glycine cleavage system catalyzes the degradation of glycine. The H protein shuttles the methylamine group of glycine from the P protein to the T protein. The sequence is that of Glycine cleavage system H protein from Acinetobacter baylyi (strain ATCC 33305 / BD413 / ADP1).